Reading from the N-terminus, the 179-residue chain is uncharacterized protein (179 aa).

The segment at 1 to 32 (MELQGAQEDLGISLSSPRRNHETRPGSKAKGR) is disordered.

This is an uncharacterized protein from Homo sapiens (Human).